Here is a 327-residue protein sequence, read N- to C-terminus: Aliphatic sulfonates import ATP-binding protein SsuB (327 aa).

A disordered region spans residues 21 to 54 (ELAQPRIADGDAQDAAVYERDGGAHAPPDGDRAD). Positions 37–54 (VYERDGGAHAPPDGDRAD) are enriched in basic and acidic residues. Positions 66–285 (VRLTRVSKRY…ARASAAFAAL (220 aa)) constitute an ABC transporter domain. Position 98–105 (98–105 (GRSGCGKS)) interacts with ATP. The interval 300–327 (APAAPNAAGPEGASRGRAAPASGLRWAV) is disordered.

Belongs to the ABC transporter superfamily. Aliphatic sulfonates importer (TC 3.A.1.17.2) family. As to quaternary structure, the complex is composed of two ATP-binding proteins (SsuB), two transmembrane proteins (SsuC) and a solute-binding protein (SsuA).

It localises to the cell inner membrane. It catalyses the reaction ATP + H2O + aliphatic sulfonate-[sulfonate-binding protein]Side 1 = ADP + phosphate + aliphatic sulfonateSide 2 + [sulfonate-binding protein]Side 1.. Functionally, part of the ABC transporter complex SsuABC involved in aliphatic sulfonates import. Responsible for energy coupling to the transport system. The protein is Aliphatic sulfonates import ATP-binding protein SsuB of Burkholderia pseudomallei (strain K96243).